The following is a 592-amino-acid chain: NADH-ubiquinone oxidoreductase chain 5 (592 aa).

The next 14 membrane-spanning stretches (helical) occupy residues 36-56 (LSMVVMVPVGIVTLSVLIYAI), 68-88 (FYIILSVFAIFMTVLVISDNY), 89-109 (IMMFMGWEFVGVVSYLLISFW), 132-152 (LFVICIGTMLSYFHAVDFETM), 169-189 (MMLLMAATAKSAQLGLHGWLL), 196-216 (TPVSALTHAATMVCSGVFVLV), 229-249 (LLVMLWLAGFTTLMSGLMAVV), 256-276 (VMALSTMSQLAMMMLAMGSSA), 279-299 (LAMYHLYCHAFFKALLFMSAG), 322-342 (LPFSYTTMLMASLSLMAMPGL), 364-386 (YIMYYIATASATLTAIYSLRVTY), 406-426 (STHMAMPMFILTIYSMFLGYA), 451-471 (LPAMFKLLPLMLGLSLSLTTV), and 534-554 (ALINIPVLLMMNMTYTFIVFF).

Belongs to the complex I subunit 5 family.

The protein resides in the mitochondrion inner membrane. It carries out the reaction a ubiquinone + NADH + 5 H(+)(in) = a ubiquinol + NAD(+) + 4 H(+)(out). In terms of biological role, core subunit of the mitochondrial membrane respiratory chain NADH dehydrogenase (Complex I) that is believed to belong to the minimal assembly required for catalysis. Complex I functions in the transfer of electrons from NADH to the respiratory chain. The immediate electron acceptor for the enzyme is believed to be ubiquinone. In Debaryomyces hansenii (strain ATCC 36239 / CBS 767 / BCRC 21394 / JCM 1990 / NBRC 0083 / IGC 2968) (Yeast), this protein is NADH-ubiquinone oxidoreductase chain 5 (ND5).